The chain runs to 334 residues: Glyceraldehyde-3-phosphate dehydrogenase 1 (334 aa).

NAD(+) contacts are provided by residues 11–12 (RI), aspartate 33, arginine 77, and serine 119. D-glyceraldehyde 3-phosphate-binding positions include 150–152 (SCT) and threonine 181. Cysteine 151 functions as the Nucleophile in the catalytic mechanism. Asparagine 182 provides a ligand contact to NAD(+). D-glyceraldehyde 3-phosphate contacts are provided by residues arginine 196, 209–210 (TG), and arginine 232. Position 314 (asparagine 314) interacts with NAD(+).

The protein belongs to the glyceraldehyde-3-phosphate dehydrogenase family. In terms of assembly, homotetramer.

It localises to the cytoplasm. It carries out the reaction D-glyceraldehyde 3-phosphate + phosphate + NAD(+) = (2R)-3-phospho-glyceroyl phosphate + NADH + H(+). It participates in carbohydrate degradation; glycolysis; pyruvate from D-glyceraldehyde 3-phosphate: step 1/5. Its function is as follows. Catalyzes the oxidative phosphorylation of glyceraldehyde 3-phosphate (G3P) to 1,3-bisphosphoglycerate (BPG) using the cofactor NAD. The first reaction step involves the formation of a hemiacetal intermediate between G3P and a cysteine residue, and this hemiacetal intermediate is then oxidized to a thioester, with concomitant reduction of NAD to NADH. The reduced NADH is then exchanged with the second NAD, and the thioester is attacked by a nucleophilic inorganic phosphate to produce BPG. The chain is Glyceraldehyde-3-phosphate dehydrogenase 1 (gap1) from Bacillus cereus.